The chain runs to 530 residues: C2H2-type transcription factor MSN2 (530 aa).

2 C2H2-type zinc fingers span residues 409-437 (FVCDLCNRRFRRQEHLKRHYRSLHTQEKP) and 438-465 (FECNECGKKFSRSDNLAQHARTHASGGA).

The protein localises to the nucleus. It is found in the cytoplasm. Its function is as follows. Transcription factor that acts as a key downstream transcription factor in the HOG1-MAPK pathway. Plays crucial roles in the regulation of dimorphism transition, aggravated pigmentation, conidiation, microsclerotia formation and subsequent virulence towards Spodoptera litura larvae. More specifically regulates the expression of genes involved in antioxidation, pigment biosynthesis and ion transport and storage. The chain is C2H2-type transcription factor MSN2 from Metarhizium rileyi (strain RCEF 4871) (Nomuraea rileyi).